The chain runs to 579 residues: V-type ATP synthase alpha chain (579 aa).

An ATP-binding site is contributed by 227–234 (GGFGTGKT).

This sequence belongs to the ATPase alpha/beta chains family.

It carries out the reaction ATP + H2O + 4 H(+)(in) = ADP + phosphate + 5 H(+)(out). Its function is as follows. Produces ATP from ADP in the presence of a proton gradient across the membrane. The V-type alpha chain is a catalytic subunit. This chain is V-type ATP synthase alpha chain, found in Anaeromyxobacter dehalogenans (strain 2CP-C).